The following is a 350-amino-acid chain: tRNA uridine(34) hydroxylase (350 aa).

Residues 146 to 240 enclose the Rhodanese domain; sequence DDPDALFIDM…YARKAREQGL (95 aa). Catalysis depends on C200, which acts as the Cysteine persulfide intermediate.

It belongs to the TrhO family.

It catalyses the reaction uridine(34) in tRNA + AH2 + O2 = 5-hydroxyuridine(34) in tRNA + A + H2O. In terms of biological role, catalyzes oxygen-dependent 5-hydroxyuridine (ho5U) modification at position 34 in tRNAs, the first step in 5-carboxymethoxyuridine (cmo5U) biosynthesis. May be part of an alternate pathway, which is able to bypass cmo5U biogenesis in a subset of tRNAs under aerobic conditions. The chain is tRNA uridine(34) hydroxylase from Escherichia coli O81 (strain ED1a).